A 488-amino-acid polypeptide reads, in one-letter code: Mannitol 2-dehydrogenase (488 aa).

37-48 (IVHVGVGGFHRA) serves as a coordination point for NAD(+).

Belongs to the mannitol dehydrogenase family. In terms of assembly, monomer.

The enzyme catalyses D-mannitol + NAD(+) = D-fructose + NADH + H(+). In terms of biological role, catalyzes the NAD(H)-dependent interconversion of D-fructose and D-mannitol in the mannitol metabolic pathway. In Aspergillus niger (strain ATCC MYA-4892 / CBS 513.88 / FGSC A1513), this protein is Mannitol 2-dehydrogenase.